The primary structure comprises 486 residues: Glucose-6-phosphate 1-dehydrogenase (486 aa).

Residues 13 to 20, R47, 86 to 87, and K149 contribute to the NADP(+) site; these read GGTGDLAK and DV. Substrate contacts are provided by H179, K183, E217, and D236. H241 (proton acceptor) is an active-site residue. K339 and K344 together coordinate substrate.

The protein belongs to the glucose-6-phosphate dehydrogenase family. Homodimer.

It catalyses the reaction D-glucose 6-phosphate + NAD(+) = 6-phospho-D-glucono-1,5-lactone + NADH + H(+). The enzyme catalyses D-glucose 6-phosphate + NADP(+) = 6-phospho-D-glucono-1,5-lactone + NADPH + H(+). The protein operates within carbohydrate degradation; pentose phosphate pathway; D-ribulose 5-phosphate from D-glucose 6-phosphate (oxidative stage): step 1/3. Functionally, catalyzes the oxidation of glucose 6-phosphate to 6-phosphogluconolactone. Can utilize either NADP(+) or NAD(+). This chain is Glucose-6-phosphate 1-dehydrogenase, found in Leuconostoc mesenteroides.